We begin with the raw amino-acid sequence, 29 residues long: Dermaseptin-1.2TR (29 aa).

V29 is modified (valine amide).

As to expression, expressed by the skin glands.

It localises to the secreted. Functionally, has antimicrobial activity. This chain is Dermaseptin-1.2TR, found in Phyllomedusa trinitatis (Trinidad leaf frog).